The following is a 231-amino-acid chain: 7-cyano-7-deazaguanine synthase (231 aa).

ATP is bound at residue 8-18; sequence FSGGQDSTTCL. Zn(2+)-binding residues include Cys188, Cys197, Cys200, and Cys203.

Belongs to the QueC family. The cofactor is Zn(2+).

The catalysed reaction is 7-carboxy-7-deazaguanine + NH4(+) + ATP = 7-cyano-7-deazaguanine + ADP + phosphate + H2O + H(+). Its pathway is purine metabolism; 7-cyano-7-deazaguanine biosynthesis. Its function is as follows. Catalyzes the ATP-dependent conversion of 7-carboxy-7-deazaguanine (CDG) to 7-cyano-7-deazaguanine (preQ(0)). The polypeptide is 7-cyano-7-deazaguanine synthase (Salmonella schwarzengrund (strain CVM19633)).